The following is a 96-amino-acid chain: Small ribosomal subunit protein bS6 (96 aa).

This sequence belongs to the bacterial ribosomal protein bS6 family.

Its function is as follows. Binds together with bS18 to 16S ribosomal RNA. The chain is Small ribosomal subunit protein bS6 from Streptococcus uberis (strain ATCC BAA-854 / 0140J).